The primary structure comprises 426 residues: Glutamate-1-semialdehyde 2,1-aminomutase (426 aa).

Position 265 is an N6-(pyridoxal phosphate)lysine (K265).

This sequence belongs to the class-III pyridoxal-phosphate-dependent aminotransferase family. HemL subfamily. As to quaternary structure, homodimer. The cofactor is pyridoxal 5'-phosphate.

It is found in the cytoplasm. The enzyme catalyses (S)-4-amino-5-oxopentanoate = 5-aminolevulinate. The protein operates within porphyrin-containing compound metabolism; protoporphyrin-IX biosynthesis; 5-aminolevulinate from L-glutamyl-tRNA(Glu): step 2/2. The polypeptide is Glutamate-1-semialdehyde 2,1-aminomutase (Sodalis glossinidius (strain morsitans)).